A 612-amino-acid chain; its full sequence is BTB/POZ domain-containing protein 9 (612 aa).

The BTB domain maps to Gly-36 to Asp-104. The 99-residue stretch at Val-142–Arg-240 folds into the BACK domain. Residues Gln-560 to Gln-612 are disordered. Polar residues predominate over residues Thr-573–Asp-584. The segment covering Leu-588–Gln-612 has biased composition (low complexity).

Detected in the brain (at protein level). Moderately expressed in all specific brain regions examined. Expressed in the dopaminergic neurons of the substantia nigra and A11 neurons. Highly expressed in kidney and moderately expressed in all other adult and fetal tissues.

The polypeptide is BTB/POZ domain-containing protein 9 (BTBD9) (Homo sapiens (Human)).